Consider the following 3460-residue polypeptide: Reelin (3460 aa).

The signal sequence occupies residues 1 to 25 (MERSGWARQTFLLALLLGATLRARA). Residues 26 to 190 (AAGYYPRFSP…GAPTDVTVHP (165 aa)) form the Reelin domain. The cysteines at positions 40 and 126 are disulfide-linked. The N-linked (GlcNAc...) asparagine glycan is linked to Asn140. A disulfide bridge connects residues Cys154 and Cys178. N-linked (GlcNAc...) asparagine glycosylation is found at Asn257, Asn289, and Asn305. Cysteines 539 and 580 form a disulfide. Residues 592–603 (EFSTNHGRSWSL) form a BNR 1 repeat. A disulfide bridge links Cys608 with Cys613. N-linked (GlcNAc...) asparagine glycosylation occurs at Asn628. Residues 670 to 701 (IGPSCLKFCSGRGQCTRHGCKCDPGFSGPACE) enclose the EGF-like 1 domain. Intrachain disulfides connect Cys674/Cys684 and Cys691/Cys700. One copy of the BNR 2 repeat lies at 798-809 (HYSYDNGITWKL). A disulfide bridge links Cys894 with Cys936. Residues 951–962 (EYSTNHGLTWHL) form a BNR 3 repeat. 3 disulfide bridges follow: Cys967–Cys974, Cys1033–Cys1043, and Cys1050–Cys1059. Positions 1029–1060 (IGQQCPNMCSGHGSCDHGICRCDQGYQGTECH) constitute an EGF-like 2 domain. A BNR 4 repeat occupies 1156–1167 (QYSNNGGIQWHL). Asn1266 is a glycosylation site (N-linked (GlcNAc...) asparagine). Cysteines 1270 and 1309 form a disulfide. One copy of the BNR 5 repeat lies at 1322 to 1333 (QYSHDAGMSWFL). Cys1338 and Cys1347 are joined by a disulfide. The region spanning 1408 to 1441 (ISEPCPSYCSGHGDCISGVCFCDLGYTAAQGTCV) is the EGF-like 3 domain. The BNR 6 repeat unit spans residues 1534–1545 (QYSNDNGILWHL). Asn1599 carries N-linked (GlcNAc...) asparagine glycosylation. Residues Cys1632 and Cys1672 are joined by a disulfide bond. A BNR 7 repeat occupies 1685–1696 (QYSLNNGKDWHL). Residues Cys1701 and Cys1708 are joined by a disulfide bond. N-linked (GlcNAc...) asparagine glycosylation is present at Asn1749. Residues 1764–1795 (LASGCPWMCSGRGICDAGRCVCDRGFGGPYCV) enclose the EGF-like 4 domain. One copy of the BNR 8 repeat lies at 1883 to 1894 (QFSISGGITWHL). Asn1920 carries N-linked (GlcNAc...) asparagine glycosylation. The stretch at 2042–2053 (EFSRDFGATWHL) is one BNR 9 repeat. Positions 2060 and 2073 each coordinate Zn(2+). The EGF-like 5 domain maps to 2128 to 2160 (IGPQCEEMCNGQGSCINGTKCICDPGYSGPTCK). 3 disulfides stabilise this stretch: Cys2132–Cys2142, Cys2136–Cys2148, and Cys2150–Cys2159. N-linked (GlcNAc...) asparagine glycosylation occurs at Asn2144. Glu2178 serves as a coordination point for Zn(2+). Cys2194 and Cys2234 are joined by a disulfide. The BNR 10 repeat unit spans residues 2249–2260 (QYSLNGGLSWSL). Glu2263 is a Zn(2+) binding site. 2 N-linked (GlcNAc...) asparagine glycosylation sites follow: Asn2268 and Asn2316. 3 cysteine pairs are disulfide-bonded: Cys2347-Cys2386, Cys2392-Cys2558, and Cys2543-Cys2583. Positions 2396, 2398, and 2459 each coordinate Zn(2+). The stretch at 2398 to 2409 (EYSVDLGLSWHP) is one BNR 11 repeat. Positions 2477–2508 (IGDGCIDMCSGHGRCIQGNCVCDEQWGGLYCD) constitute an EGF-like 6 domain. An N-linked (GlcNAc...) asparagine glycan is attached at Asn2568. 2 BNR repeats span residues 2597–2608 (EYSVNGGITWNL) and 2777–2788 (QYSTDFGVSWNY). Intrachain disulfides connect Cys2793–Cys2800, Cys2856–Cys2866, Cys2860–Cys2871, Cys2873–Cys2882, and Cys2918–Cys2965. The EGF-like 7 domain occupies 2852–2883 (LGPGCLDNCRGHGDCLREQCICDPGYSGPNCY). Asn2961 carries N-linked (GlcNAc...) asparagine glycosylation. The BNR 14 repeat unit spans residues 2978–2989 (DYSTDGGITWTL). 2 N-linked (GlcNAc...) asparagine glycosylation sites follow: Asn3015 and Asn3072. A BNR 15 repeat occupies 3142-3154 (EYTKDARSDSWQL). Cys3159 and Cys3169 are joined by a disulfide. N-linked (GlcNAc...) asparagine glycosylation is present at Asn3184. One can recognise an EGF-like 8 domain in the interval 3227–3259 (IGEACPKLCSGHGYCTTGAICICDESFQGDDCS). Intrachain disulfides connect Cys3231-Cys3241, Cys3235-Cys3247, Cys3249-Cys3258, and Cys3295-Cys3345. A BNR 16 repeat occupies 3362–3373 (QYSVNNGITWHV). Residues Asn3411 and Asn3438 are each glycosylated (N-linked (GlcNAc...) asparagine).

This sequence belongs to the reelin family. In terms of assembly, oligomer of disulfide-linked homodimers. In terms of processing, N-glycosylated and to a lesser extent also O-glycosylated. Abundantly produced during brain ontogenesis by the Cajal-Retzius cells and other pioneer neurons located in the telencephalic marginal zone and by granule cells of the external granular layer of the cerebellum. In adult brain, preferentially expressed in GABAergic interneurons of prefrontal cortices, temporal cortex, hippocampus and glutamatergic granule cells of cerebellum. Expression is reduced to about 50% in patients with schizophrenia. Also expressed in fetal and adult liver.

The protein localises to the secreted. It localises to the extracellular space. Its subcellular location is the extracellular matrix. Extracellular matrix serine protease secreted by pioneer neurons that plays a role in layering of neurons in the cerebral cortex and cerebellum by coordinating cell positioning during neurodevelopment. Regulates microtubule function in neurons and neuronal migration. Binding to the extracellular domains of lipoprotein receptors VLDLR and LRP8/APOER2 induces tyrosine phosphorylation of DAB1 and modulation of TAU phosphorylation. Affects migration of sympathetic preganglionic neurons in the spinal cord, where it seems to act as a barrier to neuronal migration. Enzymatic activity is important for the modulation of cell adhesion. The protein is Reelin (RELN) of Homo sapiens (Human).